Consider the following 335-residue polypeptide: UPF0353 protein MT1528 (335 aa).

Helical transmembrane passes span 18–38 (WFFL…LMQL) and 67–87 (VPAI…AGPT). In terms of domain architecture, VWFA spans 98–294 (VVMLVIDVSQ…AELRAVYSSL (197 aa)). Residues 309–329 (VGWLRLGALALALAALAALLI) form a helical membrane-spanning segment.

The protein belongs to the UPF0353 family.

It localises to the cell membrane. In Mycobacterium tuberculosis (strain CDC 1551 / Oshkosh), this protein is UPF0353 protein MT1528.